A 1018-amino-acid chain; its full sequence is Serine/threonine-protein phosphatase BSL2 (1018 aa).

Residues 1 to 75 (MDEDSSMVAD…AAAVVGQEQQ (75 aa)) form a disordered region. Residues 41–57 (SPPPEGGSVPTPPPSDP) are compositionally biased toward pro residues. Residues 63–75 (QQQAAAVVGQEQQ) are compositionally biased toward low complexity. Kelch repeat units follow at residues 149 to 195 (TSAG…VATA), 253 to 301 (YLMA…TASA), 306 to 356 (LLLL…VFVN), 362 to 409 (SGGA…DAAG), and 430 to 479 (LIFI…RLPG). The segment at 569–590 (DRDCGAEATPSGKPTFSLIKPD) is disordered. Serine 627 carries the phosphoserine modification. Residues aspartate 720, histidine 722, aspartate 754, and asparagine 786 each coordinate Mn(2+). Histidine 787 functions as the Proton donor in the catalytic mechanism. 2 residues coordinate Mn(2+): histidine 839 and histidine 918. Phosphoserine is present on serine 975. Residues 994 to 1011 (ANRPATPTRGRPQNSNDR) are compositionally biased toward polar residues. The interval 994-1018 (ANRPATPTRGRPQNSNDRGGSLAWM) is disordered.

Belongs to the PPP phosphatase family. BSU subfamily. As to quaternary structure, interacts with BSK8. Mn(2+) serves as cofactor. As to expression, expressed throughout the plant, with a higher level in younger parts.

The protein resides in the cytoplasm. It is found in the cell membrane. The protein localises to the nucleus. It catalyses the reaction O-phospho-L-seryl-[protein] + H2O = L-seryl-[protein] + phosphate. It carries out the reaction O-phospho-L-threonyl-[protein] + H2O = L-threonyl-[protein] + phosphate. In terms of biological role, phosphatase involved in elongation process, probably by acting as a regulator of brassinolide signaling. The chain is Serine/threonine-protein phosphatase BSL2 (BSL2) from Arabidopsis thaliana (Mouse-ear cress).